A 3038-amino-acid polypeptide reads, in one-letter code: Lovastatin nonaketide synthase, polyketide synthase component (3038 aa).

The Ketosynthase family 3 (KS3) domain maps to 8-447 (NEPIVVVGSG…GTNAHAIIEE (440 aa)). Active-site for beta-ketoacyl synthase activity residues include C181, H320, and H367. The interval 562 to 889 (IFTGQGAQWP…GKNDLDTFSR (328 aa)) is malonyl-CoA:ACP transacylase (MAT) domain. The For malonyltransferase activity role is filled by S656. The lovC-binding stretch occupies residues 695–757 (AMLAAGMSFE…DESTFARLLR (63 aa)). The N-terminal hotdog fold stretch occupies residues 953 to 1089 (HLLLGKLSEY…GQLALMIGDV (137 aa)). The segment at 953–1263 (HLLLGKLSEY…ENITFKPFSP (311 aa)) is dehydratase (DH) domain. In terms of domain architecture, PKS/mFAS DH spans 953–1267 (HLLLGKLSEY…FKPFSPPDAS (315 aa)). H985 (proton acceptor; for dehydratase activity) is an active-site residue. The tract at residues 1107–1267 (EEHPHMNRVN…FKPFSPPDAS (161 aa)) is C-terminal hotdog fold. The Proton donor; for dehydratase activity role is filled by D1174. The tract at residues 1443–1543 (LEIGAGTGGA…ARSLLKPGGQ (101 aa)) is methyltransferase (CMet) domain. The interval 2139–2437 (TLPTRVRSID…KIPEYRGAKA (299 aa)) is ketoreductase (KR) domain. The region spanning 2463–2538 (QIVIDGLSAK…DLADEAAARL (76 aa)) is the Carrier domain. At S2498 the chain carries O-(pantetheine 4'-phosphoryl)serine. Residues 2546–2602 (VAATDGGAESTDNTSENEVSGREDTDLSAAATITEPSSADEDDTEPGDEDVPRSHHP) are disordered. The span at 2583-2594 (SADEDDTEPGDE) shows a compositional bias: acidic residues. The segment at 2602–2952 (PLSLGQEYSW…PTSNQPAPLL (351 aa)) is inactive Condensation domain.

Homodimer. Each MAT domain from the lovB homodimer binds one lovC molecule to form the final active lovB-lovC megasynthase complex. It depends on pantetheine 4'-phosphate as a cofactor.

The catalysed reaction is holo-[lovastatin nonaketide synthase] + 9 malonyl-CoA + S-adenosyl-L-methionine + 11 NADPH + 19 H(+) = dihydromonacolin L-[lovastatin nonaketide synthase] + S-adenosyl-L-homocysteine + 9 CO2 + 11 NADP(+) + 9 CoA + 6 H2O. It participates in polyketide biosynthesis; lovastatin biosynthesis. In terms of biological role, lovastatin nonaketide synthase; part of the gene cluster that mediates the biosynthesis of lovastatin (also known as mevinolin, mevacor or monacolin K), a hypolipidemic inhibitor of (3S)-hydroxymethylglutaryl-coenzyme A (HMG-CoA) reductase (HMGR). The first step in the biosynthesis of lovastatin is the production of dihydromonacolin L acid by the lovastatin nonaketide synthase lovB and the trans-acting enoyl reductase lovC (called the lovB-lovC megasynthase complex) via condensation of one acetyl-CoA unit and 8 malonyl-CoA units. Dihydromonacolin L acid is released from lovB by the thioesterase lovG. Next, dihydromonacolin L acid is oxidized by the dihydromonacolin L monooxygenase lovA twice to form monacolin J acid. The 2-methylbutyrate moiety of lovastatin is synthesized by the lovastatin diketide synthase lovF via condensation of one acetyl-CoA unit and one malonyl-CoA unit. Finally, the covalent attachment of this moiety to monacolin J acid is catalyzed by the transesterase lovD to yield lovastatin. LovD has broad substrate specificity and can also convert monacolin J to simvastatin using alpha-dimethylbutanoyl-S-methyl-3-mercaptopropionate (DMB-S-MMP) as the thioester acyl donor, and can also catalyze the reverse reaction and function as hydrolase in vitro. LovD has much higher activity with LovF-bound 2-methylbutanoate than with free diketide substrates. The sequence is that of Lovastatin nonaketide synthase, polyketide synthase component (lovB) from Aspergillus terreus (strain NIH 2624 / FGSC A1156).